Reading from the N-terminus, the 241-residue chain is Neuroendocrine secretory protein 55 (241 aa).

The first 46 residues, 1-46, serve as a signal peptide directing secretion; that stretch reads MDRRSRPQLGRRARHNYNDLCPPIGRRAATALLWLSCSIALLRALA. Positions 71–241 are disordered; it reads AAQVFPEPPE…KRGAIPIRRH (171 aa). Residues 97–125 show a composition bias toward acidic residues; the sequence is EYQEEEFDYESETESESEIESETEFETES. A compositionally biased stretch (low complexity) spans 167 to 177; sequence PDASPSRAPPS. Residues 182–198 are compositionally biased toward basic and acidic residues; that stretch reads ESPRQGEEPEDKDPRDP. Positions 212–221 are enriched in basic residues; that stretch reads QHRCKPKKPT.

This sequence belongs to the NESP55 family. Post-translationally, binds keratan sulfate chains. May be proteolytically processed to give rise to a number of active peptides. In terms of tissue distribution, highly expressed in adrenal medulla and anterior and posterior pituitary. In the brain, detected in hypothalamus, hippocampus, caudate nucleus, thalamus and, in significantly lower amounts, in the cerebellum.

Its subcellular location is the cytoplasmic vesicle. It is found in the secretory vesicle. It localises to the secreted. This is Neuroendocrine secretory protein 55 from Bos taurus (Bovine).